A 286-amino-acid chain; its full sequence is Thymidylate synthase (286 aa).

DUMP contacts are provided by residues arginine 21 and arginine 136 to arginine 137. Cysteine 156 acts as the Nucleophile in catalysis. DUMP is bound by residues arginine 176–aspartate 179, asparagine 187, and histidine 217–tyrosine 219. Residue aspartate 179 coordinates (6R)-5,10-methylene-5,6,7,8-tetrahydrofolate. Position 285 (alanine 285) interacts with (6R)-5,10-methylene-5,6,7,8-tetrahydrofolate.

Belongs to the thymidylate synthase family. As to quaternary structure, homodimer.

The catalysed reaction is dUMP + (6R)-5,10-methylene-5,6,7,8-tetrahydrofolate = 7,8-dihydrofolate + dTMP. Its pathway is pyrimidine metabolism; dTTP biosynthesis. The sequence is that of Thymidylate synthase (TD) from Enterobacteria phage T4 (Bacteriophage T4).